A 334-amino-acid chain; its full sequence is Protein-methionine-sulfoxide reductase catalytic subunit MsrP (334 aa).

The tat-type signal signal peptide spans 1–44 (MKKNQFLKESDVTAESVFFMKRRQVLKALGISAAALSLPHAAHA). Residues asparagine 88, 91–92 (YE), cysteine 146, threonine 181, asparagine 233, arginine 238, and 249–251 (GIK) each bind Mo-molybdopterin.

It belongs to the MsrP family. In terms of assembly, heterodimer of a catalytic subunit (MsrP) and a heme-binding subunit (MsrQ). It depends on Mo-molybdopterin as a cofactor. Post-translationally, predicted to be exported by the Tat system. The position of the signal peptide cleavage has not been experimentally proven.

The protein resides in the periplasm. It catalyses the reaction L-methionyl-[protein] + a quinone + H2O = L-methionyl-(S)-S-oxide-[protein] + a quinol. The enzyme catalyses L-methionyl-[protein] + a quinone + H2O = L-methionyl-(R)-S-oxide-[protein] + a quinol. In terms of biological role, part of the MsrPQ system that repairs oxidized periplasmic proteins containing methionine sulfoxide residues (Met-O), using respiratory chain electrons. Thus protects these proteins from oxidative-stress damage caused by reactive species of oxygen and chlorine generated by the host defense mechanisms. MsrPQ is essential for the maintenance of envelope integrity under bleach stress, rescuing a wide series of structurally unrelated periplasmic proteins from methionine oxidation, including the primary periplasmic chaperone SurA and the lipoprotein Pal. The catalytic subunit MsrP is non-stereospecific, being able to reduce both (R-) and (S-) diastereoisomers of methionine sulfoxide. The sequence is that of Protein-methionine-sulfoxide reductase catalytic subunit MsrP from Escherichia coli O9:H4 (strain HS).